Reading from the N-terminus, the 321-residue chain is Olfactory receptor 3A2 (321 aa).

Over 1-35 (MSLQKLMEPEAGTNRTAVAEFILLGLVQTEEMQPV) the chain is Extracellular. Asn-14 is a glycosylation site (N-linked (GlcNAc...) asparagine). A helical membrane pass occupies residues 36–58 (VFVLLLFAYLVTTGGNLSILAAV). Residues 59–66 (LVEPKLHA) are Cytoplasmic-facing. Residues 67–88 (PMYFFLGNLSVLDVGCITVTVP) traverse the membrane as a helical segment. At 89–109 (AMLGRLLSHKSTISYDACLSQ) the chain is on the extracellular side. Cysteines 106 and 198 form a disulfide. The helical transmembrane segment at 110-129 (LFFFHLLAGMDCFLLTAMAY) threads the bilayer. Residues 130–149 (DRLLAICQPLTYSTRMSQTV) lie on the Cytoplasmic side of the membrane. Residues 150–167 (QRMLVAASLACAFTNALT) form a helical membrane-spanning segment. At 168-205 (HTVAMSTLNFCGPNEVNHFYCDLPQLFQLSCSSTQLNE) the chain is on the extracellular side. The chain crosses the membrane as a helical span at residues 206–229 (LLLFAVGFIMAGTPLVLIITAYSH). Residues 230–246 (VAAAVLRIRSVEGRKKA) are Cytoplasmic-facing. The helical transmembrane segment at 247 to 270 (FSTCGSHLTVVCLFFGRGIFNYMR) threads the bilayer. Residues 271–281 (LGSEEASDKDK) are Extracellular-facing. The chain crosses the membrane as a helical span at residues 282-301 (GVGVFNTVINPMLNPLIYSL). Over 302 to 321 (RNPDVQGALWQIFLGRRSLT) the chain is Cytoplasmic.

It belongs to the G-protein coupled receptor 1 family.

It localises to the cell membrane. Its function is as follows. Odorant receptor. In Homo sapiens (Human), this protein is Olfactory receptor 3A2 (OR3A2).